Here is a 266-residue protein sequence, read N- to C-terminus: Enterotoxin type C-3 (266 aa).

A signal peptide spans methionine 1 to alanine 27. Zn(2+) is bound by residues aspartate 36 and aspartate 110. Cysteine 120 and cysteine 137 are joined by a disulfide. 2 residues coordinate Zn(2+): histidine 145 and histidine 149.

This sequence belongs to the staphylococcal/streptococcal toxin family. In terms of assembly, interacts with MHC class II molecules composed of alpha/HLA-DRA and beta/HLA-DRB1 chains. Interacts with host T-cell receptor/TCR beta variable chain TRBV8-2.

Its subcellular location is the secreted. In terms of biological role, staphylococcal enterotoxin that activates the host immune system by binding as unprocessed molecules to major histocompatibility (MHC) complex class II and T-cell receptor (TCR) molecules. In turn, this ternary complex activates a large number of T-lymphocytes initiating a systemic release of pro-inflammatory cytokines. Also causes the intoxication staphylococcal food poisoning syndrome. In Staphylococcus aureus, this protein is Enterotoxin type C-3 (entC3).